The following is a 301-amino-acid chain: Acetyl-coenzyme A carboxylase carboxyl transferase subunit beta (301 aa).

Residues leucine 29–proline 298 form the CoA carboxyltransferase N-terminal domain.

The protein belongs to the AccD/PCCB family. As to quaternary structure, acetyl-CoA carboxylase is a heterohexamer composed of biotin carboxyl carrier protein (AccB), biotin carboxylase (AccC) and two subunits each of ACCase subunit alpha (AccA) and ACCase subunit beta (AccD).

It is found in the cytoplasm. The catalysed reaction is N(6)-carboxybiotinyl-L-lysyl-[protein] + acetyl-CoA = N(6)-biotinyl-L-lysyl-[protein] + malonyl-CoA. The protein operates within lipid metabolism; malonyl-CoA biosynthesis; malonyl-CoA from acetyl-CoA: step 1/1. Functionally, component of the acetyl coenzyme A carboxylase (ACC) complex. Biotin carboxylase (BC) catalyzes the carboxylation of biotin on its carrier protein (BCCP) and then the CO(2) group is transferred by the transcarboxylase to acetyl-CoA to form malonyl-CoA. This chain is Acetyl-coenzyme A carboxylase carboxyl transferase subunit beta, found in Methylobacterium nodulans (strain LMG 21967 / CNCM I-2342 / ORS 2060).